Consider the following 154-residue polypeptide: Superoxide dismutase [Cu-Zn] (154 aa).

Histidine 47, histidine 49, and histidine 64 together coordinate Cu cation. Cysteine 58 and cysteine 147 are joined by a disulfide. Zn(2+) is bound by residues histidine 64, histidine 72, histidine 81, and aspartate 84. Cu cation is bound at residue histidine 121. Basic and acidic residues predominate over residues 125 to 137; the sequence is DDLGRGGNEESKK. The segment at 125-147 is disordered; the sequence is DDLGRGGNEESKKTGNAGPRPAC. Arginine 144 serves as a coordination point for substrate.

As to quaternary structure, homodimer. The cofactor is Cu cation. It depends on Zn(2+) as a cofactor.

Its subcellular location is the cytoplasm. The catalysed reaction is 2 superoxide + 2 H(+) = H2O2 + O2. In terms of biological role, destroys radicals which are normally produced within the cells and which are toxic to biological systems. This chain is Superoxide dismutase [Cu-Zn], found in Aspergillus niger.